The chain runs to 120 residues: MFKLFNQASRIFFGIALPCLIFLGGIFSLGNTALAADLAHGKAIFAGNCAACHNGGLNAINPSKTLKMADLEANGKNSVAAIVAQITNGNGAMPGFKGRISDSDMEDVAAYVLDQAEKGW.

A signal peptide spans Met1–Ala35. Heme c contacts are provided by Cys49, Cys52, His53, and Met93.

This sequence belongs to the cytochrome c family. PetJ subfamily. As to quaternary structure, monomer. Binds 1 heme c group covalently per subunit.

The protein localises to the cellular thylakoid lumen. Functions as an electron carrier between membrane-bound cytochrome b6-f and photosystem I in oxygenic photosynthesis. This Synechocystis sp. (strain ATCC 27184 / PCC 6803 / Kazusa) protein is Cytochrome c6 (petJ).